The following is a 428-amino-acid chain: Stabilizer of axonemal microtubules 4 (428 aa).

Residues 201–231 (AKEETGFTEESNKNPIVFQPPSQALPGDPVL) are disordered.

Microtubule inner protein component of sperm flagellar doublet microtubules. Interacts with PPP1CA.

It is found in the cell projection. The protein resides in the cilium. Its subcellular location is the cytoplasm. The protein localises to the cytoskeleton. It localises to the flagellum axoneme. The protein is Stabilizer of axonemal microtubules 4 of Bos taurus (Bovine).